The sequence spans 413 residues: MTKTRHLTILGSTGSIGESTLDVVARHPGRYQVVALTADRNVEKMFEQCIQFHPPYAVMLDAQSAEQLEDRLHAAGLDTRVLSGIESLEKVASLPEIDTVMAAIVGAAGIRPTLAAARTGKHILLANKETLVMAGRVFMDTLRQHHATLLPIDSEHNAIFQSLPQHFNGDLAGSGVRRILLTASGGPFRTVDLKILETVTPEQACAHPNWVMGRKISVDSATMMNKGLEVIEAHWLFNAVPEKIQVVIHPQSVIHSMVEYIDGSVLAQLGNPDMRTPIAHALSYPERMESGVQSLDMFKVARLDFESPDFKRFPCLRLAYEALAAGGNMPAVLNAANEVAVEVFLAGRIPFTAIPVMIEDVMKSTERRDVPDLEGVLLADLQARATAREWLACNIRQSTGQPGKPASSLSAGQ.

NADPH contacts are provided by T13, G14, S15, I16, R40, N41, and N127. 1-deoxy-D-xylulose 5-phosphate is bound at residue K128. E129 contacts NADPH. D153 contributes to the Mn(2+) binding site. S154, E155, S184, and H207 together coordinate 1-deoxy-D-xylulose 5-phosphate. Residue E155 coordinates Mn(2+). G213 contacts NADPH. 1-deoxy-D-xylulose 5-phosphate contacts are provided by S220, N225, K226, and E229. E229 provides a ligand contact to Mn(2+).

Belongs to the DXR family. Mg(2+) is required as a cofactor. Requires Mn(2+) as cofactor.

The catalysed reaction is 2-C-methyl-D-erythritol 4-phosphate + NADP(+) = 1-deoxy-D-xylulose 5-phosphate + NADPH + H(+). It participates in isoprenoid biosynthesis; isopentenyl diphosphate biosynthesis via DXP pathway; isopentenyl diphosphate from 1-deoxy-D-xylulose 5-phosphate: step 1/6. Functionally, catalyzes the NADPH-dependent rearrangement and reduction of 1-deoxy-D-xylulose-5-phosphate (DXP) to 2-C-methyl-D-erythritol 4-phosphate (MEP). This is 1-deoxy-D-xylulose 5-phosphate reductoisomerase from Nitrosomonas europaea (strain ATCC 19718 / CIP 103999 / KCTC 2705 / NBRC 14298).